Here is a 118-residue protein sequence, read N- to C-terminus: Ribonuclease P protein component (118 aa).

The protein belongs to the RnpA family. Consists of a catalytic RNA component (M1 or rnpB) and a protein subunit.

The catalysed reaction is Endonucleolytic cleavage of RNA, removing 5'-extranucleotides from tRNA precursor.. In terms of biological role, RNaseP catalyzes the removal of the 5'-leader sequence from pre-tRNA to produce the mature 5'-terminus. It can also cleave other RNA substrates such as 4.5S RNA. The protein component plays an auxiliary but essential role in vivo by binding to the 5'-leader sequence and broadening the substrate specificity of the ribozyme. This Shewanella denitrificans (strain OS217 / ATCC BAA-1090 / DSM 15013) protein is Ribonuclease P protein component.